The sequence spans 199 residues: Nucleoside triphosphate pyrophosphatase (199 aa).

The Proton acceptor role is filled by Asp-72.

Belongs to the Maf family. It depends on a divalent metal cation as a cofactor.

It localises to the cytoplasm. The enzyme catalyses a ribonucleoside 5'-triphosphate + H2O = a ribonucleoside 5'-phosphate + diphosphate + H(+). The catalysed reaction is a 2'-deoxyribonucleoside 5'-triphosphate + H2O = a 2'-deoxyribonucleoside 5'-phosphate + diphosphate + H(+). In terms of biological role, nucleoside triphosphate pyrophosphatase. May have a dual role in cell division arrest and in preventing the incorporation of modified nucleotides into cellular nucleic acids. In Synechococcus elongatus (strain ATCC 33912 / PCC 7942 / FACHB-805) (Anacystis nidulans R2), this protein is Nucleoside triphosphate pyrophosphatase.